A 386-amino-acid polypeptide reads, in one-letter code: DNA dC-&gt;dU-editing enzyme APOBEC-3D (386 aa).

2 CMP/dCMP-type deaminase domains span residues 29–145 and 187–334; these read GRSY…DWRW and DDNY…LCSL. His78, Cys109, Cys112, and His262 together coordinate Zn(2+). Catalysis depends on Glu264, which acts as the Proton donor. Cys293 and Cys296 together coordinate Zn(2+).

The protein belongs to the cytidine and deoxycytidylate deaminase family. Can form homo- and heterodimers with APOBEC3F and APOBEC3G. Interacts with L1RE1; this interaction inhibits LINE-1 retrotransposition. As to quaternary structure, (Microbial infection) Interacts with HIV-1 Vif. This interaction triggers APOBEC3D polyubiquitylation and degradation by the 26S proteasome. The cofactor is Zn(2+). In terms of tissue distribution, expressed in lymphoid organs. Also detected in non-lymphoid tissues including lung.

It localises to the cytoplasm. It is found in the P-body. The enzyme catalyses a 2'-deoxycytidine in single-stranded DNA + H2O + H(+) = a 2'-deoxyuridine in single-stranded DNA + NH4(+). Its activity is regulated as follows. (Microbial infection) Antiviral activity is neutralized by the HIV-1 virion infectivity factor (Vif), that prevents its incorporation into progeny virions by both inhibiting its translation and/or by inducing its ubiquitination and subsequent degradation by the 26S proteasome. DNA deaminase (cytidine deaminase) which acts as an inhibitor of retrovirus replication and retrotransposon mobility via deaminase-dependent and -independent mechanisms. Exhibits antiviral activity against HIV-1. After the penetration of retroviral nucleocapsids into target cells of infection and the initiation of reverse transcription, it can induce the conversion of cytosine to uracil in the minus-sense single-strand viral DNA, leading to G-to-A hypermutations in the subsequent plus-strand viral DNA. The resultant detrimental levels of mutations in the proviral genome, along with a deamination-independent mechanism that works prior to the proviral integration, together exert efficient antiretroviral effects in infected target cells. Selectively targets single-stranded DNA and does not deaminate double-stranded DNA or single- or double-stranded RNA. Also inhibits the mobility of LTR and non-LTR retrotransposons. Functionally, (Microbial infection) Enhances hepatitis B virus/HBV replication by excluding restriction factors APOBEC3F and APOBEC3G from HBV capsids. This is DNA dC-&gt;dU-editing enzyme APOBEC-3D from Homo sapiens (Human).